A 312-amino-acid polypeptide reads, in one-letter code: Peroxidase (312 aa).

The N-terminal stretch at 1 to 23 is a signal peptide; sequence MAMGSASCISLVVLVALATAASG. Gln-24 bears the Pyrrolidone carboxylic acid mark. 4 disulfides stabilise this stretch: Cys-34–Cys-107, Cys-67–Cys-70, Cys-113–Cys-307, and Cys-192–Cys-218. His-65 acts as the Proton acceptor in catalysis. Ca(2+) contacts are provided by Asp-66, Gly-69, Asp-71, and Ser-73. Residue Pro-155 participates in substrate binding. His-185 lines the heme b pocket. Thr-186 is a binding site for Ca(2+). Residues Asp-231, Thr-234, and Asp-239 each coordinate Ca(2+). Asn-262 carries an N-linked (GlcNAc...) asparagine glycan.

The protein belongs to the peroxidase family. Classical plant (class III) peroxidase subfamily. Ca(2+) serves as cofactor. It depends on heme b as a cofactor. As to expression, root.

The protein localises to the secreted. The enzyme catalyses 2 a phenolic donor + H2O2 = 2 a phenolic radical donor + 2 H2O. In terms of biological role, removal of H(2)O(2), oxidation of toxic reductants, biosynthesis and degradation of lignin, suberization, auxin catabolism, response to environmental stresses such as wounding, pathogen attack and oxidative stress. These functions might be dependent on each isozyme/isoform in each plant tissue. Functionally, involved in defense response to powdery meldew fungus. This Triticum aestivum (Wheat) protein is Peroxidase.